We begin with the raw amino-acid sequence, 319 residues long: Coproporphyrin III ferrochelatase (319 aa).

Residues H193 and E274 each coordinate Fe(2+).

The protein belongs to the ferrochelatase family.

The protein resides in the cytoplasm. It catalyses the reaction Fe-coproporphyrin III + 2 H(+) = coproporphyrin III + Fe(2+). Its pathway is porphyrin-containing compound metabolism; protoheme biosynthesis. Its function is as follows. Involved in coproporphyrin-dependent heme b biosynthesis. Catalyzes the insertion of ferrous iron into coproporphyrin III to form Fe-coproporphyrin III. This chain is Coproporphyrin III ferrochelatase, found in Streptococcus mutans serotype c (strain ATCC 700610 / UA159).